Here is a 160-residue protein sequence, read N- to C-terminus: Small ribosomal subunit protein uS7 (160 aa).

The protein belongs to the universal ribosomal protein uS7 family. Part of the 30S ribosomal subunit. Contacts proteins S9 and S11.

Functionally, one of the primary rRNA binding proteins, it binds directly to 16S rRNA where it nucleates assembly of the head domain of the 30S subunit. Is located at the subunit interface close to the decoding center, probably blocks exit of the E-site tRNA. This Rickettsia akari (strain Hartford) protein is Small ribosomal subunit protein uS7.